The chain runs to 243 residues: Ribonuclease 3 (243 aa).

One can recognise an RNase III domain in the interval phenylalanine 19–glycine 144. Glutamate 61 is a binding site for Mg(2+). The active site involves aspartate 65. 2 residues coordinate Mg(2+): asparagine 130 and glutamate 133. Glutamate 133 is a catalytic residue. Positions serine 172–asparagine 240 constitute a DRBM domain.

This sequence belongs to the ribonuclease III family. Homodimer. Mg(2+) is required as a cofactor.

It is found in the cytoplasm. The enzyme catalyses Endonucleolytic cleavage to 5'-phosphomonoester.. Its function is as follows. Digests double-stranded RNA. Involved in the processing of primary rRNA transcript to yield the immediate precursors to the large and small rRNAs (23S and 16S). Processes some mRNAs, and tRNAs when they are encoded in the rRNA operon. Processes pre-crRNA and tracrRNA of type II CRISPR loci if present in the organism. In Zunongwangia profunda (strain DSM 18752 / CCTCC AB 206139 / SM-A87) (Wangia profunda), this protein is Ribonuclease 3 (rnc).